The chain runs to 192 residues: Adenylate kinase (192 aa).

10 to 18 serves as a coordination point for ATP; sequence GVPGVGGTT.

It belongs to the archaeal adenylate kinase family. Monomer.

The protein resides in the cytoplasm. It catalyses the reaction AMP + ATP = 2 ADP. In Methanotorris igneus (Methanococcus igneus), this protein is Adenylate kinase (adkA).